The chain runs to 336 residues: Calcium uniporter protein 3, mitochondrial (336 aa).

The N-terminal 69 residues, 1 to 69 (MAMRKLLSKK…RFMHNSAMIR (69 aa)), are a transit peptide targeting the mitochondrion. Helical transmembrane passes span 231–251 (LWAG…LTFW) and 257–277 (VMEP…YAFF). A Selectivity filter motif is present at residues 255–263 (WDVMEPICF). E259 contacts Ca(2+).

It belongs to the MCU (TC 1.A.77) family.

It localises to the mitochondrion inner membrane. It catalyses the reaction Ca(2+)(in) = Ca(2+)(out). Its function is as follows. Mitochondrial inner membrane calcium uniporter that mediates calcium uptake into mitochondria. Constitutes a pore-forming and calcium-conducting subunit. Mitochondrial calcium homeostasis plays key roles in cellular physiology and regulates cell bioenergetics, cytoplasmic calcium signals and activation of cell death pathways. This chain is Calcium uniporter protein 3, mitochondrial, found in Arabidopsis thaliana (Mouse-ear cress).